We begin with the raw amino-acid sequence, 366 residues long: Inhibin alpha chain (366 aa).

The signal sequence occupies residues 1–20 (MVSQRSLLLLLLLTLRDVDS). Positions 21–63 (CQGPELVRELVLAKVKALFLDALGPPAMDGEGGDPGIRRLPRR) are excised as a propeptide. Positions 64 to 233 (HAVGGFMHRT…APSAGERARR (170 aa)) are cleaved as a propeptide — inhibin alpha N-terminal region. Asn147 and Asn269 each carry an N-linked (GlcNAc...) asparagine glycan. Disulfide bonds link Cys263-Cys328, Cys292-Cys363, and Cys296-Cys365.

The protein belongs to the TGF-beta family. As to quaternary structure, dimeric, linked by one or more disulfide bonds. Activin B is a dimer of alpha and beta-B. Inhibin A is a dimer of alpha and beta-A. Inhibin B is a dimer of alpha and beta-B. Interacts with TGFBR3L; this interaction regulates female fertility. In terms of processing, proteolytic processing yields a number of bioactive forms, consisting either solely of the mature alpha chain, of the most N-terminal propeptide linked through a disulfide bond to the mature alpha chain, or of the entire proprotein.

Its subcellular location is the secreted. Functionally, inhibins and activins inhibit and activate, respectively, the secretion of follitropin by the pituitary gland. Inhibins/activins are involved in regulating a number of diverse functions such as hypothalamic and pituitary hormone secretion, gonadal hormone secretion, germ cell development and maturation, erythroid differentiation, insulin secretion, nerve cell survival, embryonic axial development or bone growth, depending on their subunit composition. Inhibins appear to oppose the functions of activins. Inhibin A is a dimer of alpha/INHA and beta-A/INHBA that functions as a feedback regulator in the hypothalamic-pituitary-gonadal (HPG) axis. Inhibits the secretion of FSH from the anterior pituitary gland by acting on pituitary gonadotrope cells. Antagonizes activin A by binding to the proteoglycan, betaglycan, and forming a stable complex with and, thereby, sequestering type II activin receptors while excluding type I receptor. In terms of biological role, inhibin B is a dimer of alpha and beta-B that plays a crucial role in the regulation of the reproductive system by inhibiting the secretion of follicle-stimulating hormone (FSH) from the anterior pituitary gland. Thereby, maintains reproductive homeostasis in both males and females. Acts as a more potent suppressor of FSH release than inhibin A. Functions as competitive receptor antagonist binding activin type II receptors with high affinity in the presence of the TGF-beta type III coreceptor/TGFBR3L. This is Inhibin alpha chain (Inha) from Mus musculus (Mouse).